The chain runs to 193 residues: MSFVPYVIEQNSRGERSYDIYSRLLKDRIIFLGEEVTDVSANLVVAQMLFLEAEDPSKDIHFYINSPGGSVSAGFAIYDTMQYIKCDVSTICIGMAASMGAFLLSGGAKGKRLALPNAEIMIHQPSGGARGQETEIRIVAENILKTRNKLNEILAANTGKSVEEISRDTERDNYMTAQEAVAYGLIDSVVEKR.

The active-site Nucleophile is Ser-98. His-123 is a catalytic residue.

The protein belongs to the peptidase S14 family. As to quaternary structure, fourteen ClpP subunits assemble into 2 heptameric rings which stack back to back to give a disk-like structure with a central cavity, resembling the structure of eukaryotic proteasomes.

It localises to the cytoplasm. The catalysed reaction is Hydrolysis of proteins to small peptides in the presence of ATP and magnesium. alpha-casein is the usual test substrate. In the absence of ATP, only oligopeptides shorter than five residues are hydrolyzed (such as succinyl-Leu-Tyr-|-NHMec, and Leu-Tyr-Leu-|-Tyr-Trp, in which cleavage of the -Tyr-|-Leu- and -Tyr-|-Trp bonds also occurs).. Functionally, cleaves peptides in various proteins in a process that requires ATP hydrolysis. Has a chymotrypsin-like activity. Plays a major role in the degradation of misfolded proteins. This is ATP-dependent Clp protease proteolytic subunit from Lachnospira eligens (strain ATCC 27750 / DSM 3376 / VPI C15-48 / C15-B4) (Eubacterium eligens).